Reading from the N-terminus, the 211-residue chain is MRFFLWNAILALWVTVLSGALIPEPEVKIEVLQKPFICHRKTKGGDLMLVHYEGYLEKDGSLFHSTHKHNNGQPVWFTLGILEVLKGWDQGLKGMCVGEKRKLTVPPALGYGKEGKGKIPPESTLIFNIDLLEIRNGPRSHESFQEMDLNDDWRLSKHEVKVYLQKEFEKHGAVVNESHHDALVEDIFDKEDEDKDGFISAREFTYVHDEL.

The N-terminal stretch at 1 to 19 (MRFFLWNAILALWVTVLSG) is a signal peptide. A disulfide bridge links Cys-38 with Cys-96. Positions 45-135 (GDLMLVHYEG…IFNIDLLEIR (91 aa)) constitute a PPIase FKBP-type domain. Positions 135 to 170 (RNGPRSHESFQEMDLNDDWRLSKHEVKVYLQKEFEK) constitute an EF-hand 1 domain. Residues Asp-148, Asn-150, Asp-152, Arg-154, and Glu-159 each contribute to the Ca(2+) site. The N-linked (GlcNAc...) asparagine glycan is linked to Asn-176. The EF-hand 2 domain maps to 179 to 211 (HHDALVEDIFDKEDEDKDGFISAREFTYVHDEL). Positions 192, 194, 196, and 203 each coordinate Ca(2+). Residues 208 to 211 (HDEL) carry the Prevents secretion from ER motif.

Monomer. Homodimer. Interacts with type III, type IV and type X collagens.

The protein localises to the endoplasmic reticulum lumen. The enzyme catalyses [protein]-peptidylproline (omega=180) = [protein]-peptidylproline (omega=0). Inhibited by tacrolimus/FK506. In terms of biological role, PPIase which accelerates the folding of proteins during protein synthesis. Has a preference for substrates containing 4-hydroxylproline modifications, including type III collagen. May also target type VI and type X collagens. The chain is Peptidyl-prolyl cis-trans isomerase FKBP14 (Fkbp14) from Mus musculus (Mouse).